The chain runs to 224 residues: UPF0758 protein PLES_57141 (224 aa).

The region spanning 102-224 is the MPN domain; it reads ILESPQAVRD…PLSLAEYGWL (123 aa). Residues His-173, His-175, and Asp-186 each coordinate Zn(2+). The short motif at 173 to 186 is the JAMM motif element; the sequence is HNHPSGDARPSLAD.

Belongs to the UPF0758 family.

This Pseudomonas aeruginosa (strain LESB58) protein is UPF0758 protein PLES_57141.